The following is an 88-amino-acid chain: Small ribosomal subunit protein bS16 (88 aa).

This sequence belongs to the bacterial ribosomal protein bS16 family.

This Symbiobacterium thermophilum (strain DSM 24528 / JCM 14929 / IAM 14863 / T) protein is Small ribosomal subunit protein bS16.